A 200-amino-acid chain; its full sequence is Small ribosomal subunit protein uS4 (200 aa).

The disordered stretch occupies residues 22-42; sequence TGKELEKRPYAPGPHGPNQRK. An S4 RNA-binding domain is found at 92 to 152; it reads ARLDNLVYRM…EKSNNLVVVK (61 aa).

It belongs to the universal ribosomal protein uS4 family. As to quaternary structure, part of the 30S ribosomal subunit. Contacts protein S5. The interaction surface between S4 and S5 is involved in control of translational fidelity.

In terms of biological role, one of the primary rRNA binding proteins, it binds directly to 16S rRNA where it nucleates assembly of the body of the 30S subunit. With S5 and S12 plays an important role in translational accuracy. The sequence is that of Small ribosomal subunit protein uS4 from Bacillus thuringiensis subsp. konkukian (strain 97-27).